A 153-amino-acid polypeptide reads, in one-letter code: Ribonuclease K6 (153 aa).

The first 27 residues, 1 to 27, serve as a signal peptide directing secretion; it reads MVVDLPRYLPLLLLLELWEPMYLLCSQ. H41 serves as the catalytic Proton acceptor. Disulfide bonds link C49-C107, C63-C117, C81-C132, and C88-C95. N-linked (GlcNAc...) asparagine glycosylation is present at N58. Position 64-68 (64-68) interacts with substrate; sequence KQINT. The N-linked (GlcNAc...) asparagine glycan is linked to N85. K89 lines the substrate pocket. The active-site Proton donor is H148.

This sequence belongs to the pancreatic ribonuclease family. In terms of assembly, interacts (via N-terminus) with bacterial lipopolysaccharide (LPS). Highly expressed in spleen (at protein level). Has little or no expression in healthy kidneys (at protein level). Detected at high levels in infected kidneys (at protein level). Expressed at low levels in bladder. Also detected in skeletal muscle, heart and bone marrow.

The protein localises to the secreted. Its subcellular location is the lysosome. It localises to the cytoplasmic granule. Ribonuclease which shows a preference for the pyrimidines uridine and cytosine. Has potent antibacterial activity against a range of Gram-positive and Gram-negative bacteria, including P.aeruginosa, A.baumanii, M.luteus, S.aureus, E.faecalis, E.faecium, S.saprophyticus and E.coli. Causes loss of bacterial membrane integrity, and also promotes agglutination of Gram-negative bacteria. Probably contributes to urinary tract sterility. Bactericidal activity is independent of RNase activity. The polypeptide is Ribonuclease K6 (Rnase6) (Mus musculus (Mouse)).